A 453-amino-acid chain; its full sequence is G-protein coupled receptor 39 (453 aa).

Residues 1–34 (MASPSLPGSDCSQIIDHSHVPEFEVATWIKITLI) lie on the Extracellular side of the membrane. Cystine bridges form between C11–C191 and C108–C210. Zn(2+)-binding residues include H17 and H19. The chain crosses the membrane as a helical span at residues 35–55 (LVYLIIFVMGLLGNSATIRVT). At 56-69 (QVLQKKGYLQKEVT) the chain is on the cytoplasmic side. A helical transmembrane segment spans residues 70–89 (DHMVSLACSDILVFLIGMPM). The Extracellular portion of the chain corresponds to 90–109 (EFYSIIWNPLTTSSYTLSCK). The chain crosses the membrane as a helical span at residues 110 to 131 (LHTFLFEACSYATLLHVLTLSF). The Cytoplasmic portion of the chain corresponds to 132-151 (ERYIAICHPFRYKAVSGPCQ). A helical transmembrane segment spans residues 152-172 (VKLLIGFVWVTSALVALPLLF). Over 173-217 (AMGTEYPLVNVPSHRGLTCNRSSTRHHEQPETSNMSICTNLSSRW) the chain is Extracellular. N-linked (GlcNAc...) asparagine glycosylation is found at N192, N206, and N212. A helical membrane pass occupies residues 218–242 (TVFQSSIFGAFVVYLVVLLSVAFMC). Residues 243-283 (WNMMQVLMKSQKGSLAGGTRPPQLRKSESEESRTARRQTII) lie on the Cytoplasmic side of the membrane. A disordered region spans residues 255-274 (GSLAGGTRPPQLRKSESEES). The helical transmembrane segment at 284–305 (FLRLIVVTLAVCWMPNQIRRIM) threads the bilayer. Residues 306–323 (AAAKPKHDWTRSYFRAYM) are Extracellular-facing. Residues 324-344 (ILLPFSETFFYLSSVINPLLY) form a helical membrane-spanning segment. Over 345–453 (TVSSQQFRRV…AENGFQEHEV (109 aa)) the chain is Cytoplasmic. At S396 the chain carries Phosphoserine. A disordered region spans residues 415 to 453 (SEAEPQSKSQSLSLESLEPNSGAKPANSAAENGFQEHEV). Over residues 418–435 (EPQSKSQSLSLESLEPNS) the composition is skewed to low complexity.

This sequence belongs to the G-protein coupled receptor 1 family. Interacts with HTR1A. Interacts with GALR1. Expressed in many tissues, including the stomach, intestine and hypothalamus.

It localises to the cell membrane. Zinc-sensing receptor that can sense changes in extracellular Zn(2+), mediate Zn(2+) signal transmission, and participates in the regulation of numerous physiological processes including glucose homeostasis regulation, gastrointestinal mobility, hormone secretion and cell death. Activation by Zn(2+) in keratinocytes increases the intracellular concentration of Ca(2+) and activates the ERK/MAPK and PI3K/AKT signaling pathways leading to epithelial repair. Plays an essential role in normal wound healing by inducing the production of cytokines including the major inflammatory cytokine IL6 via the PKC/MAPK/CEBPB pathway. Regulates adipose tissue metabolism, especially lipolysis, and regulates the function of lipases, such as hormone-sensitive lipase and adipose triglyceride lipase. Plays a role in the inhibition of cell death and protects against oxidative, endoplasmic reticulum and mitochondrial stress by inducing secretion of the cytoprotective pigment epithelium-derived growth factor (PEDF) and probably other protective transcripts in a GNA13/RHOA/SRE-dependent manner. Forms dynamic heteroreceptor complexes with HTR1A and GALR1 depending on cell type or specific physiological states, resulting in signaling diversity: HTR1A-GPR39 shows additive increase in signaling along the serum response element (SRE) and NF-kappa-B pathways while GALR1 acts as an antagonist blocking SRE. The sequence is that of G-protein coupled receptor 39 (GPR39) from Homo sapiens (Human).